A 248-amino-acid polypeptide reads, in one-letter code: MGYNKALRYSRHDGTSCVIDNHHLKSLGSVLNDVRHKKDRIREAEYEPILDIANQYMVTEDPFRGPGKNVRITLFKEIRRVQPDTMKLVCNWSGKEFLRETWTRFISEEFPITTDQEIMDLWFEIQLRPMQPNRCYKFTMQYALGANPEYVAHDVIRQQDPYYVGPNNMERINLSKKGFAFPLTCLQSVYNDNFERFFDDILWPYFHRPLVYVGTTSAEIEEIMIEVSLLFKIKEFAPDVPLFTGPAY.

Belongs to the polyhedrin family.

Component of the virus occlusion bodies, which are large proteinaceous structures, that protect the virus from the outside environment for extended periods until they are ingested by insect larvae. The protein is Granulin of Choristoneura fumiferana (Spruce budworm moth).